Here is a 393-residue protein sequence, read N- to C-terminus: COP9 signalosome complex subunit 4 (393 aa).

The 166-residue stretch at 197–362 (MFLKASLRYY…RLIQFENVGD (166 aa)) folds into the PCI domain.

Belongs to the CSN4 family. In terms of assembly, component of the CSN complex. The holocomplex is comprised of 8 subunits csn1-8. In the complex, it probably interacts directly with csn1, csn2, csn3, csn4, csn6 and csn8.

It localises to the cytoplasm. The protein resides in the nucleus. Component of the COP9 signalosome complex (CSN), a complex involved in various cellular and developmental processes. The CSN complex is an essential regulator of the ubiquitin (Ubl) conjugation pathway by mediating the deneddylation of the cullin subunits of E3 ligase complexes, leading to modify the Ubl ligase activity. This Dictyostelium discoideum (Social amoeba) protein is COP9 signalosome complex subunit 4 (csn4).